Consider the following 226-residue polypeptide: UPF0758 protein GTNG_2548 (226 aa).

The 123-residue stretch at 104-226 (VIRCPEDGAK…FISLKEKGYV (123 aa)) folds into the MPN domain. The Zn(2+) site is built by His-175, His-177, and Asp-188. A JAMM motif motif is present at residues 175–188 (HNHPSGDPTPSRED).

The protein belongs to the UPF0758 family.

This Geobacillus thermodenitrificans (strain NG80-2) protein is UPF0758 protein GTNG_2548.